The chain runs to 143 residues: MFDFDATLPFMALQFLLLAAVLNAIFYKPLTKVLDDRDSYIRTNTLEARESLAKAERLATEYEQQLADARRQSQATVEAAQLEAKKITAEKIAEAQKEAQSQREQASVEIEQQKQQAFSTLEQQVDALSRQILEKLLGPTPVR.

The helical transmembrane segment at 6–26 threads the bilayer; sequence ATLPFMALQFLLLAAVLNAIF.

Belongs to the ATPase B chain family. In terms of assembly, F-type ATPases have 2 components, F(1) - the catalytic core - and F(0) - the membrane proton channel. F(1) has five subunits: alpha(3), beta(3), gamma(1), delta(1), epsilon(1). F(0) has four main subunits: a(1), b(1), b'(1) and c(10-14). The alpha and beta chains form an alternating ring which encloses part of the gamma chain. F(1) is attached to F(0) by a central stalk formed by the gamma and epsilon chains, while a peripheral stalk is formed by the delta, b and b' chains.

The protein localises to the cellular thylakoid membrane. In terms of biological role, f(1)F(0) ATP synthase produces ATP from ADP in the presence of a proton or sodium gradient. F-type ATPases consist of two structural domains, F(1) containing the extramembraneous catalytic core and F(0) containing the membrane proton channel, linked together by a central stalk and a peripheral stalk. During catalysis, ATP synthesis in the catalytic domain of F(1) is coupled via a rotary mechanism of the central stalk subunits to proton translocation. Functionally, component of the F(0) channel, it forms part of the peripheral stalk, linking F(1) to F(0). The b'-subunit is a diverged and duplicated form of b found in plants and photosynthetic bacteria. This chain is ATP synthase subunit b', found in Nostoc punctiforme (strain ATCC 29133 / PCC 73102).